A 155-amino-acid polypeptide reads, in one-letter code: V-type proton ATPase 16 kDa proteolipid subunit c (155 aa).

Residues 1–10 (MSEAKSGPEY) are Lumenal-facing. Residues 11 to 33 (ASFFAVMGASAAMVFSALGAAYG) form a helical membrane-spanning segment. Residues 34 to 55 (TAKSGTGIAAMSVMRPEMIMKS) lie on the Cytoplasmic side of the membrane. Residues 56–76 (IIPVVMAGIIAIYGLVVAVLI) traverse the membrane as a helical segment. Residues 77-92 (ANSLNDGISLYRSFLQ) are Lumenal-facing. The helical transmembrane segment at 93–114 (LGAGLSVGLSGLAAGFAIGIVG) threads the bilayer. Residues 115-131 (DAGVRGTAQQPRLFVGM) are Cytoplasmic-facing. Residues 132–152 (ILILIFAEVLGLYGLIVALIL) traverse the membrane as a helical segment. Topologically, residues 153-155 (STK) are lumenal.

The protein belongs to the V-ATPase proteolipid subunit family. V-ATPase is a heteromultimeric enzyme made up of two complexes: the ATP-hydrolytic V1 complex and the proton translocation V0 complex. The V1 complex consists of three catalytic AB heterodimers that form a heterohexamer, three peripheral stalks each consisting of EG heterodimers, one central rotor including subunits D and F, and the regulatory subunits C and H. The proton translocation complex V0 consists of the proton transport subunit a, a ring of proteolipid subunits c9c'', rotary subunit d, subunits e and f, and the accessory subunits ATP6AP1/Ac45 and ATP6AP2/PRR. Interacts with the V0 complex V-ATPase subunit a4 ATP6V0A4. Interacts with LASS2. Interacts with RNF182; this interaction leads to ubiquitination and degradation via the proteasome pathway. Post-translationally, ubiquitinated by RNF182, leading to its degradation via the ubiquitin-proteasome pathway.

It is found in the cytoplasmic vesicle. Its subcellular location is the clathrin-coated vesicle membrane. The protein resides in the secretory vesicle. The protein localises to the synaptic vesicle membrane. Proton-conducting pore forming subunit of the V0 complex of vacuolar(H+)-ATPase (V-ATPase), a multisubunit enzyme composed of a peripheral complex (V1) that hydrolyzes ATP and a membrane integral complex (V0) that translocates protons. V-ATPase is responsible for acidifying and maintaining the pH of intracellular compartments and in some cell types, is targeted to the plasma membrane, where it is responsible for acidifying the extracellular environment. This is V-type proton ATPase 16 kDa proteolipid subunit c (ATP6V0C) from Ovis aries (Sheep).